The sequence spans 294 residues: Protease HtpX homolog (294 aa).

A run of 2 helical transmembrane segments spans residues 12 to 32 and 34 to 54; these read VLFG…ASSF and SPGV…YSYW. Residue His138 participates in Zn(2+) binding. Glu139 is an active-site residue. His142 lines the Zn(2+) pocket. 2 helical membrane-spanning segments follow: residues 152 to 172 and 188 to 208; these read SVAG…VFFG and LALL…QLAI. Position 213 (Glu213) interacts with Zn(2+).

The protein belongs to the peptidase M48B family. Zn(2+) is required as a cofactor.

Its subcellular location is the cell membrane. The sequence is that of Protease HtpX homolog from Kineococcus radiotolerans (strain ATCC BAA-149 / DSM 14245 / SRS30216).